The chain runs to 219 residues: Abasic site processing protein YobE (219 aa).

The active-site Nucleophile is the Cys2. At Cys2 the chain carries Thiazolidine linkage to a ring-opened DNA abasic site. Glu106 is an active-site residue.

This sequence belongs to the SOS response-associated peptidase family.

With respect to regulation, formation and reversal of DNA-protein cross-link depends on DNA context. Catalyzes formation of the thiazolidine linkage in presence of abasic sites in single-stranded DNA. Mediates the reversal of the thiazolidine cross-link in presence of double stranded DNA. Sensor of abasic sites in single-stranded DNA (ssDNA) required to preserve genome integrity by promoting error-free repair of abasic sites. Recognizes and binds abasic sites in ssDNA at replication forks and chemically modifies the lesion by forming a covalent cross-link with DNA: forms a stable thiazolidine linkage between a ring-opened abasic site and the alpha-amino and sulfhydryl substituents of its N-terminal catalytic cysteine residue. The DNA-protein cross-link is then reversed: able to catalyze the reversal of the thiazolidine cross-link and cycle between a cross-link and a non-cross-linked state depending on DNA context: mediates self-reversal of the thiazolidine cross-link in double stranded DNA. May act as a protease: mediates autocatalytic processing of its N-terminal methionine in order to expose the catalytic cysteine. The protein is Abasic site processing protein YobE (yobE) of Bacillus subtilis (strain 168).